A 327-amino-acid chain; its full sequence is MKMKKLVKSSVASSIALLLLSNTVDAAQHITPVSEKKVDDKITLYKTTATSDNDKLNISQILTFNFIKDKSYDKDTLVLKAAGNINSGYKKPNPKDYNYSQFYWGGKYNVSVSSESNDAVNVVDYAPKNQNEEFQVQQTLGYSYGGDINISNGLSGGLNGSKSFSETINYKQESYRTTIDRKTNHKSIGWGVEAHKIMNNGWGPYGRDSYDPTYGNELFLGGRQSSSNAGQNFLPTHQMPLLARGNFNPEFISVLSHKQNDTKKSKIKVTYQREMDRYTNQWNRLHWVGNNYKNQNTVTFTSTYEVDWQNHTVKLIGTDSKETNPGV.

Positions 1–26 (MKMKKLVKSSVASSIALLLLSNTVDA) are cleaved as a signal peptide.

Belongs to the aerolysin family. In terms of assembly, toxicity requires sequential binding and synergistic association of a class S and a class F component which form heterooligomeric complexes. LukEv (class S) associates with LukDv (class F).

It is found in the secreted. Its function is as follows. Part of a bi-component leucotoxin that acts by forming pores in the membrane of the target cells. The activity of LukEv-LukDv to rabbit leukocytes is similar to that of the Panton-Valentine leucocidin (PVL). LukEv-LukDv is hemolytic to rabbit red blood cells although the activity is only 8% of gamma-hemolysin. In Staphylococcus aureus (strain NCTC 8325 / PS 47), this protein is Leucotoxin LukDv (lukDv).